The following is a 282-amino-acid chain: Phosphoglucan phosphatase LSF2, chloroplastic (282 aa).

The transit peptide at 1-61 directs the protein to the chloroplast; the sequence is MSVIGSKSCI…GENPGTNGVS (61 aa). Substrate is bound by residues Tyr-83, 153 to 156, Asp-161, and 177 to 180; these read RHMR and SLEW. Residues 92–249 form the Tyrosine-protein phosphatase domain; that stretch reads NYTLIRDELI…TYDLAKNDPW (158 aa). Cys-193 serves as the catalytic Phosphocysteine intermediate. A Glucan phosphatase signature motif CXAGXGR motif is present at residues 193–199; sequence CSAGLGR. Substrate-binding positions include 194–199, Gly-230, Lys-245, Glu-251, 259–263, and Glu-268; these read SAGLGR and NAFED.

Widely expressed.

The protein localises to the plastid. It localises to the chloroplast. Starch-associated phosphoglucan phosphatase that selectively dephosphorylates the glucan C3 position. Probably participates in the regulation of starch degradation. The sequence is that of Phosphoglucan phosphatase LSF2, chloroplastic (LSF2) from Arabidopsis thaliana (Mouse-ear cress).